The following is a 302-amino-acid chain: 33 kDa chaperonin (302 aa).

Cystine bridges form between Cys234-Cys236 and Cys267-Cys270.

Belongs to the HSP33 family. In terms of processing, under oxidizing conditions two disulfide bonds are formed involving the reactive cysteines. Under reducing conditions zinc is bound to the reactive cysteines and the protein is inactive.

The protein localises to the cytoplasm. Its function is as follows. Redox regulated molecular chaperone. Protects both thermally unfolding and oxidatively damaged proteins from irreversible aggregation. Plays an important role in the bacterial defense system toward oxidative stress. The protein is 33 kDa chaperonin of Neisseria gonorrhoeae (strain ATCC 700825 / FA 1090).